A 284-amino-acid chain; its full sequence is 2-dehydro-3-deoxyphosphooctonate aldolase (284 aa).

This sequence belongs to the KdsA family.

The protein localises to the cytoplasm. The catalysed reaction is D-arabinose 5-phosphate + phosphoenolpyruvate + H2O = 3-deoxy-alpha-D-manno-2-octulosonate-8-phosphate + phosphate. Its pathway is carbohydrate biosynthesis; 3-deoxy-D-manno-octulosonate biosynthesis; 3-deoxy-D-manno-octulosonate from D-ribulose 5-phosphate: step 2/3. The protein operates within bacterial outer membrane biogenesis; lipopolysaccharide biosynthesis. The polypeptide is 2-dehydro-3-deoxyphosphooctonate aldolase (Enterobacter sp. (strain 638)).